Consider the following 101-residue polypeptide: Small ribosomal subunit protein uS14A (101 aa).

Positions 47 to 66 (ALASLPRDSNPNRVTNRCAL) are disordered.

This sequence belongs to the universal ribosomal protein uS14 family. As to quaternary structure, part of the 30S ribosomal subunit. Contacts proteins S3 and S10.

Its function is as follows. Binds 16S rRNA, required for the assembly of 30S particles and may also be responsible for determining the conformation of the 16S rRNA at the A site. The sequence is that of Small ribosomal subunit protein uS14A from Myxococcus xanthus (strain DK1622).